A 408-amino-acid chain; its full sequence is Peptidase T (408 aa).

His78 contributes to the Zn(2+) binding site. Asp80 is an active-site residue. Asp140 contacts Zn(2+). Glu173 (proton acceptor) is an active-site residue. Zn(2+) is bound by residues Glu174, Asp196, and His379.

It belongs to the peptidase M20B family. Zn(2+) is required as a cofactor.

The protein resides in the cytoplasm. The enzyme catalyses Release of the N-terminal residue from a tripeptide.. Functionally, cleaves the N-terminal amino acid of tripeptides. This is Peptidase T from Shigella flexneri serotype 5b (strain 8401).